The sequence spans 235 residues: RING-H2 finger protein ATL17 (235 aa).

The chain crosses the membrane as a helical span at residues 1–21 (MLTTTILILLIVILMVSLHLY). The segment at 76-118 (CSVCLSEFKDNESGRVMPNCKHTFHVHCIDMWFHSHSSCPLCR) adopts an RING-type; atypical zinc-finger fold. Positions 143-167 (VYGDTNHHEGTETTGDSVPEDSQRK) are disordered.

The protein belongs to the RING-type zinc finger family. ATL subfamily.

The protein localises to the membrane. It catalyses the reaction S-ubiquitinyl-[E2 ubiquitin-conjugating enzyme]-L-cysteine + [acceptor protein]-L-lysine = [E2 ubiquitin-conjugating enzyme]-L-cysteine + N(6)-ubiquitinyl-[acceptor protein]-L-lysine.. It participates in protein modification; protein ubiquitination. Its function is as follows. May be involved in the early steps of the plant defense signaling pathway. This Arabidopsis thaliana (Mouse-ear cress) protein is RING-H2 finger protein ATL17 (ATL17).